The sequence spans 1187 residues: Serine/threonine-protein kinase SIK3 homolog (1187 aa).

Low complexity predominate over residues 1–15; that stretch reads MAAVSSGAAAAAGIP. The disordered stretch occupies residues 1–41; sequence MAAVSSGAAAAAGIPNPNPNRERPQQQQQQQPASAALHPVA. The 252-residue stretch at 59–310 folds into the Protein kinase domain; sequence YEMERTIGKG…MEQICKNKWM (252 aa). Residues 65-73 and Lys88 each bind ATP; that span reads IGKGNFAVV. Asp181 serves as the catalytic Proton acceptor. Residue Thr214 is modified to Phosphothreonine. Phosphoserine is present on Ser218. Residues 337 to 377 form the UBA domain; sequence LINEQVLMAMAEMGFDRERTLQSLHADSYDHYSATYSLLSD. 3 disordered regions span residues 548–587, 697–776, and 1060–1092; these read LKRPRGQSPLVTSPHPIPAVAPVDEEGSDAEPDPEAVQRS, IQPS…PPGS, and CADAADAGMESDHNGYGSRSTQSDSYRPRGALQ. Residues 570-581 show a composition bias toward acidic residues; the sequence is VDEEGSDAEPDP. Residues 739–749 show a composition bias toward polar residues; that stretch reads VQYQHGSALYQ.

The protein belongs to the protein kinase superfamily. CAMK Ser/Thr protein kinase family. SNF1 subfamily. The cofactor is Mg(2+).

It carries out the reaction L-seryl-[protein] + ATP = O-phospho-L-seryl-[protein] + ADP + H(+). The catalysed reaction is L-threonyl-[protein] + ATP = O-phospho-L-threonyl-[protein] + ADP + H(+). In Danio rerio (Zebrafish), this protein is Serine/threonine-protein kinase SIK3 homolog.